Here is a 69-residue protein sequence, read N- to C-terminus: MARPNTSEVRNLSDADINEKIDGLRRELFQLRFEQATRQLANTHRFKEARIKLAQLLTVQSERQRSTAS.

It belongs to the universal ribosomal protein uL29 family.

The protein is Large ribosomal subunit protein uL29 of Synechococcus sp. (strain CC9902).